We begin with the raw amino-acid sequence, 79 residues long: Acyl carrier protein (79 aa).

One can recognise a Carrier domain in the interval 2 to 77 (SEIADKVKKI…DAIDYIEKQK (76 aa)). Position 37 is an O-(pantetheine 4'-phosphoryl)serine (Ser-37).

It belongs to the acyl carrier protein (ACP) family. 4'-phosphopantetheine is transferred from CoA to a specific serine of apo-ACP by AcpS. This modification is essential for activity because fatty acids are bound in thioester linkage to the sulfhydryl of the prosthetic group.

Its subcellular location is the cytoplasm. It functions in the pathway lipid metabolism; fatty acid biosynthesis. Functionally, carrier of the growing fatty acid chain in fatty acid biosynthesis. The polypeptide is Acyl carrier protein (Gluconacetobacter diazotrophicus (strain ATCC 49037 / DSM 5601 / CCUG 37298 / CIP 103539 / LMG 7603 / PAl5)).